We begin with the raw amino-acid sequence, 197 residues long: Class A basic helix-loop-helix protein 15 (197 aa).

Positions 1 to 12 are enriched in basic residues; the sequence is MKTKNRPPRRRT. 2 disordered regions span residues 1-82 and 178-197; these read MKTK…ERER and QPQG…REGS. T12 and T25 each carry phosphothreonine. Over residues 65–82 the composition is skewed to basic and acidic residues; that stretch reads GRRENSVQRRLESNERER. The 53-residue stretch at 72–124 folds into the bHLH domain; it reads QRRLESNERERQRMHKLNNAFQALREVIPHVRADKKLSKIETLTLAKNYIKSL.

As to quaternary structure, forms homodimers or heterodimers with TCF3 gene products E12 and E47. These dimers bind to the E-box site, however, heterodimer with MYOD1 does not bind target DNA. As to expression, expressed in pancreatic tissue only in acinar cells. There is a complete absence of expression in intra- or interlobular pancreatic ducts and in all islet cells.

It is found in the nucleus. In terms of biological role, plays a role in controlling the transcriptional activity of MyoD, ensuring that expanding myoblast populations remain undifferentiated. Repression may occur through muscle-specific E-box occupancy by homodimers. May also negatively regulate bHLH-mediated transcription through an N-terminal repressor domain. Serves as a key regulator of acinar cell function, stability, and identity. Also required for normal organelle localization in exocrine cells and for mitochondrial calcium ion transport. May function as a unique regulator of gene expression in several different embryonic and postnatal cell lineages. Binds to the E-box consensus sequence 5'-CANNTG-3'. This chain is Class A basic helix-loop-helix protein 15 (Bhlha15), found in Mus musculus (Mouse).